A 708-amino-acid polypeptide reads, in one-letter code: MTSREQLVQQVLQELQDAVESEGLEGLVGAALEAKQVLSSFALPTCREGGASPQVLEVDSVALSLYPEDAPRNMLPLACRGEGSLLFEAASVLLWGDVGFSLELRARTVVEMLLHRHYYLQGMIDSKVMLQAVRYSLCSEESPEMTSLPSATLEAIFDADVKATCFPSSFSNVWHLYALASVLQRNIYSIYPMRNLKIRPYFNRVIRPRRCDHVPATLHIMWAGQPLSSHLFRHQYFAPVVGLEEVEADGAPGPAPAPPALAPLPPPAKTLELLNQEPGLSYSHLCERYSVTKSTFYRWRRQSQEHRQKVAARFSAKHFLQDSFHRGGVVPLQQFLQRFPEISRSTYYAWKQELLGSGTCQALAPKEVQVLGELEQLPEEQMAKGLGCSSLAAASPSMVLMQRAKSYLEHCISLNTLVPYRCFKRRFPGISRSTYYNWRRKALRRNPSFKPAPALSTPGAPQPASVPEEALLPWKGEGGEGAGKATAGGPPAPHEFLPPKVPLSRWQRRLRRAARKQVLSGHLPFCRFRLRYPSLSPSTFWVWKSLARGWPRGLSKFQTQAPALGKGGLREAKEKQEKEAGRDVTAAMAPPAGTPLHVGASPGEDPGKAQGGPSGEGAMAQGRPHSRSLSSRPVAEAAVGGGDGQVLVMDMLATTKFKAQAKLFLQKRFQSKSFPSFKEFSALFPLTARSTYYMWKRALYDGLTLVDG.

2 disordered regions span residues 473 to 499 (PWKG…FLPP) and 561 to 636 (APAL…PVAE). The segment covering 568–582 (GLREAKEKQEKEAGR) has biased composition (basic and acidic residues).

Belongs to the vertnin family.

The sequence is that of Vertnin (VRTN) from Ailuropoda melanoleuca (Giant panda).